We begin with the raw amino-acid sequence, 309 residues long: Homoserine kinase (309 aa).

An ATP-binding site is contributed by 85 to 95 (PYGLGLGSSGS).

It belongs to the GHMP kinase family. Homoserine kinase subfamily.

It localises to the cytoplasm. The catalysed reaction is L-homoserine + ATP = O-phospho-L-homoserine + ADP + H(+). It functions in the pathway amino-acid biosynthesis; L-threonine biosynthesis; L-threonine from L-aspartate: step 4/5. Catalyzes the ATP-dependent phosphorylation of L-homoserine to L-homoserine phosphate. The chain is Homoserine kinase from Thermoplasma volcanium (strain ATCC 51530 / DSM 4299 / JCM 9571 / NBRC 15438 / GSS1).